The following is a 303-amino-acid chain: Thyrotroph embryonic factor (303 aa).

Disordered stretches follow at residues 1–63 and 132–176; these read MSDA…KLEE and ESAS…DPNC. At Ser32 the chain carries Phosphoserine. Positions 41 to 61 are enriched in basic and acidic residues; that stretch reads KLMENPPREARLDKEKGKEKL. The span at 133–160 shows a compositional bias: low complexity; sequence SASSSTASPPSSSTAIFQPSETVSSTES. In terms of domain architecture, bZIP spans 233 to 296; sequence DEKYWTRRKK…GKCKTIVSKY (64 aa). The tract at residues 235–255 is basic motif; that stretch reads KYWTRRKKNNVAAKRSRDARR. A leucine-zipper region spans residues 256–263; sequence LKENQITI.

The protein belongs to the bZIP family. PAR subfamily. As to quaternary structure, binds DNA as a homodimer or a heterodimer. Can form a heterodimer with DBP.

The protein localises to the nucleus. Its function is as follows. Transcription factor that binds to and transactivates the TSHB promoter. Binds to a minimal DNA-binding sequence 5'-[TC][AG][AG]TTA[TC][AG]-3'. This is Thyrotroph embryonic factor (TEF) from Homo sapiens (Human).